The primary structure comprises 71 residues: Permeability factor 2 (71 aa).

Intrachain disulfides connect C7-C33 and C9-C49.

Belongs to the intercrine alpha (chemokine CxC) family. As to quaternary structure, homodimer.

It localises to the secreted. Functionally, has chemotactic activity for neutrophils. This Oryctolagus cuniculus (Rabbit) protein is Permeability factor 2.